The primary structure comprises 203 residues: Endo-type membrane-bound lytic murein transglycosylase A (203 aa).

The N-terminal stretch at 1-15 (MKLRWFAFLIVLLAG) is a signal peptide. Cys-16 carries the N-palmitoyl cysteine lipid modification. The S-diacylglycerol cysteine moiety is linked to residue Cys-16.

It belongs to the transglycosylase Slt family.

It localises to the cell outer membrane. The catalysed reaction is Endolytic cleavage of the (1-&gt;4)-beta-glycosidic linkage between N-acetylmuramic acid (MurNAc) and N-acetylglucosamine (GlcNAc) residues in peptidoglycan with concomitant formation of a 1,6-anhydrobond in the MurNAc residue.. In terms of biological role, murein-degrading enzyme. May play a role in recycling of muropeptides during cell elongation and/or cell division. Preferentially cleaves at a distance of more than two disaccharide units from the ends of the glycan chain. This chain is Endo-type membrane-bound lytic murein transglycosylase A, found in Shigella boydii serotype 4 (strain Sb227).